The chain runs to 194 residues: Cell division protein SepF (194 aa).

2 disordered regions span residues 35 to 54 (DHRS…DSSP) and 159 to 194 (SAPS…AGGL).

The protein belongs to the SepF family. As to quaternary structure, homodimer. Interacts with FtsZ.

The protein resides in the cytoplasm. In terms of biological role, cell division protein that is part of the divisome complex and is recruited early to the Z-ring. Probably stimulates Z-ring formation, perhaps through the cross-linking of FtsZ protofilaments. Its function overlaps with FtsA. The protein is Cell division protein SepF of Prochlorococcus marinus (strain MIT 9313).